Consider the following 556-residue polypeptide: Adenine deaminase (556 aa).

It belongs to the metallo-dependent hydrolases superfamily. Adenine deaminase family. It depends on Mn(2+) as a cofactor.

It catalyses the reaction adenine + H2O + H(+) = hypoxanthine + NH4(+). In Archaeoglobus fulgidus (strain ATCC 49558 / DSM 4304 / JCM 9628 / NBRC 100126 / VC-16), this protein is Adenine deaminase.